The sequence spans 292 residues: NAD kinase (292 aa).

Asp73 acts as the Proton acceptor in catalysis. NAD(+)-binding positions include 73-74 (DG), 147-148 (NE), His158, Arg175, Asp177, 188-193 (TAYSLS), and Gln247.

This sequence belongs to the NAD kinase family. Requires a divalent metal cation as cofactor.

It localises to the cytoplasm. It catalyses the reaction NAD(+) + ATP = ADP + NADP(+) + H(+). Its function is as follows. Involved in the regulation of the intracellular balance of NAD and NADP, and is a key enzyme in the biosynthesis of NADP. Catalyzes specifically the phosphorylation on 2'-hydroxyl of the adenosine moiety of NAD to yield NADP. The protein is NAD kinase of Salmonella dublin (strain CT_02021853).